The following is a 150-amino-acid chain: Phosphoribosyl-AMP cyclohydrolase (150 aa).

Position 93 (aspartate 93) interacts with Mg(2+). A Zn(2+)-binding site is contributed by cysteine 94. Aspartate 95 and aspartate 97 together coordinate Mg(2+). Residues cysteine 112 and cysteine 119 each coordinate Zn(2+).

The protein belongs to the PRA-CH family. Homodimer. It depends on Mg(2+) as a cofactor. Requires Zn(2+) as cofactor.

The protein resides in the cytoplasm. It catalyses the reaction 1-(5-phospho-beta-D-ribosyl)-5'-AMP + H2O = 1-(5-phospho-beta-D-ribosyl)-5-[(5-phospho-beta-D-ribosylamino)methylideneamino]imidazole-4-carboxamide. Its pathway is amino-acid biosynthesis; L-histidine biosynthesis; L-histidine from 5-phospho-alpha-D-ribose 1-diphosphate: step 3/9. Its function is as follows. Catalyzes the hydrolysis of the adenine ring of phosphoribosyl-AMP. The chain is Phosphoribosyl-AMP cyclohydrolase from Rhizobium etli (strain ATCC 51251 / DSM 11541 / JCM 21823 / NBRC 15573 / CFN 42).